A 182-amino-acid polypeptide reads, in one-letter code: Isopentenyl-diphosphate Delta-isomerase (182 aa).

Mn(2+) contacts are provided by histidine 25 and histidine 32. Positions 30-164 constitute a Nudix hydrolase domain; it reads RLHLAFSSWL…PWAFSPWMVM (135 aa). Residue cysteine 67 is part of the active site. Cysteine 67 provides a ligand contact to Mg(2+). Histidine 69 provides a ligand contact to Mn(2+). Glutamate 87 is a binding site for Mg(2+). Residues glutamate 114 and glutamate 116 each contribute to the Mn(2+) site. Glutamate 116 is a catalytic residue.

This sequence belongs to the IPP isomerase type 1 family. As to quaternary structure, homodimer. It depends on Mg(2+) as a cofactor. The cofactor is Mn(2+).

It localises to the cytoplasm. The enzyme catalyses isopentenyl diphosphate = dimethylallyl diphosphate. Its pathway is isoprenoid biosynthesis; dimethylallyl diphosphate biosynthesis; dimethylallyl diphosphate from isopentenyl diphosphate: step 1/1. In terms of biological role, catalyzes the 1,3-allylic rearrangement of the homoallylic substrate isopentenyl (IPP) to its highly electrophilic allylic isomer, dimethylallyl diphosphate (DMAPP). The chain is Isopentenyl-diphosphate Delta-isomerase from Shigella dysenteriae serotype 1 (strain Sd197).